The following is an 862-amino-acid chain: Probable inorganic carbon transporter subunit DabA (862 aa).

Residues C365, D367, H540, and C555 each coordinate Zn(2+).

The protein belongs to the inorganic carbon transporter (TC 9.A.2) DabA family. In terms of assembly, forms a complex with DabB. Zn(2+) serves as cofactor.

It localises to the cell inner membrane. In terms of biological role, part of an energy-coupled inorganic carbon pump. The protein is Probable inorganic carbon transporter subunit DabA of Vibrio cholerae serotype O1 (strain ATCC 39315 / El Tor Inaba N16961).